We begin with the raw amino-acid sequence, 1009 residues long: Translation initiation factor IF-2 (1009 aa).

The tract at residues 1–415 (MSDENENGRP…EREKEKRRGG (415 aa)) is disordered. The span at 94–110 (EELRARQRVVDAAREAQ) shows a compositional bias: basic and acidic residues. Low complexity predominate over residues 111–121 (ARQVAEQAAAE). Basic and acidic residues predominate over residues 122 to 136 (ARARAAQEAAQREAA). The segment covering 137-146 (AKAAAERAAA) has biased composition (low complexity). Positions 147 to 174 (APPPVAQAPAAPAPAAPVTPPPAAPQAP) are enriched in pro residues. The segment covering 175–189 (RPVAQAPVAPSAPRQ) has biased composition (low complexity). Composition is skewed to basic and acidic residues over residues 208–218 (EPSRDRRDDRP) and 251–287 (PRPE…RPQG). Positions 311–320 (GGPPRGPRPG) are enriched in pro residues. Composition is skewed to basic and acidic residues over residues 346–358 (MDRR…DRRK) and 403–415 (RARE…RRGG). The tr-type G domain maps to 505-675 (LRPPVVTIMG…LLQAEVLDLK (171 aa)). Residues 514 to 521 (GHVDHGKT) form a G1 region. A GTP-binding site is contributed by 514 to 521 (GHVDHGKT). Positions 539–543 (GITQH) are G2. Positions 561–564 (DTPG) are G3. GTP contacts are provided by residues 561 to 565 (DTPGH) and 615 to 618 (NKMD). The segment at 615-618 (NKMD) is G4. The interval 651-653 (SAK) is G5.

Belongs to the TRAFAC class translation factor GTPase superfamily. Classic translation factor GTPase family. IF-2 subfamily.

It is found in the cytoplasm. Its function is as follows. One of the essential components for the initiation of protein synthesis. Protects formylmethionyl-tRNA from spontaneous hydrolysis and promotes its binding to the 30S ribosomal subunits. Also involved in the hydrolysis of GTP during the formation of the 70S ribosomal complex. This is Translation initiation factor IF-2 from Caulobacter vibrioides (strain ATCC 19089 / CIP 103742 / CB 15) (Caulobacter crescentus).